The following is a 354-amino-acid chain: Probable glucan endo-1,3-beta-glucosidase BG5 (354 aa).

Positions 1 to 30 (MLYLPKKLFLFFFSCIVVIVNYNNSDFVNA) are cleaved as a signal peptide. The active-site Proton donor is the Glu137. Glu276 functions as the Nucleophile in the catalytic mechanism. An N-linked (GlcNAc...) asparagine glycan is attached at Asn286.

The protein belongs to the glycosyl hydrolase 17 family.

It is found in the secreted. It carries out the reaction Hydrolysis of (1-&gt;3)-beta-D-glucosidic linkages in (1-&gt;3)-beta-D-glucans.. Its function is as follows. May play a role in plant defense against pathogens. The polypeptide is Probable glucan endo-1,3-beta-glucosidase BG5 (Arabidopsis thaliana (Mouse-ear cress)).